A 554-amino-acid chain; its full sequence is Sesquiterpene synthase 14b (554 aa).

4 residues coordinate Mg(2+): D305, D309, D449, and E457. The DDXXD motif motif lies at 305 to 309; the sequence is DDLYD.

The protein belongs to the terpene synthase family. Tpsa subfamily. Mg(2+) is required as a cofactor. Mn(2+) serves as cofactor.

It carries out the reaction (2E,6E)-farnesyl diphosphate = (E)-gamma-bisabolene + diphosphate. It catalyses the reaction (2Z,6Z)-farnesyl diphosphate = (E)-gamma-bisabolene + diphosphate. The catalysed reaction is (2Z,6Z)-farnesyl diphosphate = (E)-alpha-bisabolene + diphosphate. The enzyme catalyses (2Z,6Z)-farnesyl diphosphate = (Z)-beta-farnesene + diphosphate. It carries out the reaction (2E,6E)-farnesyl diphosphate = (E)-beta-farnesene + diphosphate. It catalyses the reaction (2E,6E)-farnesyl diphosphate = (+)-thujopsene + diphosphate. The catalysed reaction is (2Z,6Z)-farnesyl diphosphate = (E)-beta-farnesene + diphosphate. The enzyme catalyses (2E,6E)-farnesyl diphosphate = (Z)-beta-farnesene + diphosphate. It carries out the reaction (2Z,6Z)-farnesyl diphosphate = beta-acoradiene + diphosphate. It catalyses the reaction (2Z,6Z)-farnesyl diphosphate = alpha-acoradiene + diphosphate. The catalysed reaction is (2Z,6Z)-farnesyl diphosphate = beta-bisabolene + diphosphate. The enzyme catalyses (2E,6E)-farnesyl diphosphate = (-)-alpha-cedrene + diphosphate. It carries out the reaction (2E,6E)-farnesyl diphosphate = beta-bisabolene + diphosphate. It catalyses the reaction (2E,6E)-farnesyl diphosphate = beta-acoradiene + diphosphate. The catalysed reaction is (2Z,6Z)-farnesyl diphosphate = (-)-alpha-cedrene + diphosphate. The enzyme catalyses (2E)-geranyl diphosphate = terpinolene + diphosphate. It carries out the reaction (2E)-geranyl diphosphate = limonene + diphosphate. It catalyses the reaction (2E)-geranyl diphosphate = beta-myrcene + diphosphate. It participates in secondary metabolite biosynthesis; terpenoid biosynthesis. Its function is as follows. Sesquiterpene synthase involved in the biosynthesis of volatile compounds. Mediates the conversion of (2E,6E)-farnesyl diphosphate ((EE)-FPP) into (+)-thujopsene, beta-bisabolene, alpha-cederene, beta-acoradiene, (E)-gamma-bisabolene, (Z)-alpha-bisabolene, (Z)-beta-farnesene and (E)-beta-farnesene, and of (2Z,6Z)-farnesyl diphosphate ((ZZ)-FPP) into (E)-gamma-bisabolene, (E)-alpha-bisabolene, (E)-beta-farnesene, (Z)-beta-farnesene, beta-bisabolene, beta-acoradiene and alpha-acoradiene. Can act with a low efficiency as a monoterpene synthase with geranyl diphosphate (GPP) as substrate, thus producing beta-myrcene, limonene and terpinolene. The chain is Sesquiterpene synthase 14b from Solanum habrochaites (Wild tomato).